Consider the following 193-residue polypeptide: MSLLSVVFVALALSADCFAVSIGIACTHTDVKPRIMWRVAGTFGLFQAGMAVIGYYAGLSIADVISSFDHWVAFGLLTVIGGRMVYESVQGEDDQKLVRLDLTRGLGLLGVAIATSIDALAVGLTFSLSETNIGLAALLVGAVSLAVSYLGFKLGNRISHLASRWVGIAGGLILCLIGLKILAEHTLGWDILL.

The next 6 membrane-spanning stretches (helical) occupy residues 6-26 (VVFV…GIAC), 39-59 (VAGT…YAGL), 61-81 (IADV…TVIG), 106-126 (LGLL…GLTF), 132-152 (NIGL…YLGF), and 165-185 (WVGI…LAEH).

The protein belongs to the MntP (TC 9.B.29) family.

It localises to the cell membrane. Probably functions as a manganese efflux pump. The sequence is that of Putative manganese efflux pump MntP from Dehalococcoides mccartyi (strain ATCC BAA-2266 / KCTC 15142 / 195) (Dehalococcoides ethenogenes (strain 195)).